Here is a 299-residue protein sequence, read N- to C-terminus: GTP cyclohydrolase FolE2 (299 aa).

A disordered region spans residues 1 to 25 (MKTKQWPSKTERHKRFGSVPPVAGK).

Belongs to the GTP cyclohydrolase IV family.

The catalysed reaction is GTP + H2O = 7,8-dihydroneopterin 3'-triphosphate + formate + H(+). It participates in cofactor biosynthesis; 7,8-dihydroneopterin triphosphate biosynthesis; 7,8-dihydroneopterin triphosphate from GTP: step 1/1. In terms of biological role, converts GTP to 7,8-dihydroneopterin triphosphate. This Halalkalibacterium halodurans (strain ATCC BAA-125 / DSM 18197 / FERM 7344 / JCM 9153 / C-125) (Bacillus halodurans) protein is GTP cyclohydrolase FolE2.